The sequence spans 492 residues: Anthranilate synthase component 1 (492 aa).

Residues Ser48 and 273–275 (PYM) contribute to the L-tryptophan site. 308–309 (GT) is a chorismate binding site. A Mg(2+)-binding site is contributed by Glu335. Chorismate is bound by residues Tyr423, Arg443, 457 to 459 (GGG), and Gly459. Glu472 is a Mg(2+) binding site.

This sequence belongs to the anthranilate synthase component I family. As to quaternary structure, heterotetramer consisting of two non-identical subunits: a beta subunit (TrpG) and a large alpha subunit (TrpE). Mg(2+) is required as a cofactor.

The enzyme catalyses chorismate + L-glutamine = anthranilate + pyruvate + L-glutamate + H(+). It participates in amino-acid biosynthesis; L-tryptophan biosynthesis; L-tryptophan from chorismate: step 1/5. Feedback inhibited by tryptophan. Functionally, part of a heterotetrameric complex that catalyzes the two-step biosynthesis of anthranilate, an intermediate in the biosynthesis of L-tryptophan. In the first step, the glutamine-binding beta subunit (TrpG) of anthranilate synthase (AS) provides the glutamine amidotransferase activity which generates ammonia as a substrate that, along with chorismate, is used in the second step, catalyzed by the large alpha subunit of AS (TrpE) to produce anthranilate. In the absence of TrpG, TrpE can synthesize anthranilate directly from chorismate and high concentrations of ammonia. In Pseudomonas aeruginosa (strain ATCC 15692 / DSM 22644 / CIP 104116 / JCM 14847 / LMG 12228 / 1C / PRS 101 / PAO1), this protein is Anthranilate synthase component 1.